Reading from the N-terminus, the 69-residue chain is MDRKFHLCLLLVILGTIIVQGAPLENENDADPDKPQKYRYYLKRATTEKKDNDPAKPGCHYTPFGLICF.

An N-terminal signal peptide occupies residues 1-21; that stretch reads MDRKFHLCLLLVILGTIIVQG. The propeptide occupies 22–57; it reads APLENENDADPDKPQKYRYYLKRATTEKKDNDPAKP. An intrachain disulfide couples Cys-59 to Cys-68.

In terms of tissue distribution, tentacle (ecto and/or endoderm tissue), and possibly also nematoblasts.

It localises to the secreted. The protein resides in the nematocyst. In terms of biological role, peptide with unknown function. Has a limited effect on human peripheral blood mononuclear cells. Does not show activity against both Gram-positive and Gram-negative bacteria nor is it active on the 26 voltage-gated ion channels tested. The polypeptide is Peptide Hact-1 (Heliofungia actiniformis (Mushroom coral)).